The primary structure comprises 351 residues: Probable E3 ubiquitin-protein ligase sinah (351 aa).

The interval 1 to 38 (MSVRNSRPQLSWPERVSPQRTIDTPTASGEMLTRRQSA) is disordered. A compositionally biased stretch (polar residues) spans 18 to 27 (PQRTIDTPTA). An RING-type zinc finger spans residues 106–141 (CPVCFGYIMPPIMQCPRGHLICSTCRSKLTICPVCR). Residues 155-346 (VASKLIFPCK…LALNVVIRKV (192 aa)) are SBD. The segment at 158 to 218 (KLIFPCKHSH…VYQHLMSSHE (61 aa)) adopts an SIAH-type zinc-finger fold. Residues Cys-163, Cys-170, His-182, Cys-186, Cys-193, Cys-200, His-212, and His-217 each contribute to the Zn(2+) site.

This sequence belongs to the SINA (Seven in absentia) family. Interacts with ebi and phyl.

It catalyses the reaction S-ubiquitinyl-[E2 ubiquitin-conjugating enzyme]-L-cysteine + [acceptor protein]-L-lysine = [E2 ubiquitin-conjugating enzyme]-L-cysteine + N(6)-ubiquitinyl-[acceptor protein]-L-lysine.. It participates in protein modification; protein ubiquitination. Functionally, E3 ubiquitin-protein ligase that mediates ubiquitination and subsequent proteasomal degradation of target proteins. The adapter phyl is required to direct the degradation of the two isoforms of the transcriptional repressor Tramtrack (Ttk). E3 ubiquitin ligases accept ubiquitin from an E2 ubiquitin-conjugating enzyme in the form of a thioester and then directly transfers the ubiquitin to targeted substrates. It probably triggers the ubiquitin-mediated degradation of different substrates. A phyl-independent mechanism of degradation exists for isoform beta of ttk that involves motifs in the C-terminus of ttk. This chain is Probable E3 ubiquitin-protein ligase sinah (sinah), found in Drosophila melanogaster (Fruit fly).